The chain runs to 295 residues: Glutamyl-Q tRNA(Asp) synthetase (295 aa).

Residues 5–9 (RFAPS) and E41 each bind L-glutamate. The 'HIGH' region motif lies at 8–18 (PSPTGLLHIGS). Residues C97, C99, Y117, and C121 each coordinate Zn(2+). Positions 178 and 196 each coordinate L-glutamate. A 'KMSKS' region motif is present at residues 234 to 238 (KWSKQ). K237 lines the ATP pocket.

Belongs to the class-I aminoacyl-tRNA synthetase family. GluQ subfamily. Zn(2+) is required as a cofactor.

Functionally, catalyzes the tRNA-independent activation of glutamate in presence of ATP and the subsequent transfer of glutamate onto a tRNA(Asp). Glutamate is transferred on the 2-amino-5-(4,5-dihydroxy-2-cyclopenten-1-yl) moiety of the queuosine in the wobble position of the QUC anticodon. In Neisseria gonorrhoeae (strain ATCC 700825 / FA 1090), this protein is Glutamyl-Q tRNA(Asp) synthetase.